We begin with the raw amino-acid sequence, 536 residues long: Cytochrome P450 monooxygenase macC (536 aa).

A helical membrane pass occupies residues 2–22 (ALLYITTAALALLLLFLRAVF). Position 448 (Cys-448) interacts with heme.

This sequence belongs to the cytochrome P450 family. It depends on heme as a cofactor.

The protein resides in the membrane. Its pathway is secondary metabolite biosynthesis; terpenoid biosynthesis. Its function is as follows. Cytochrome P450 monooxygenase; part of the gene cluster that mediates the biosynthesis of macrophorins, isoprenoid epoxycyclohexenones containing cyclized drimane moieties. The first step of the pathway is the synthesis of 6-methylsalicylic acid (6-MSA) by the polyketide synthase macA. 6-MSA is then converted to m-cresol by the decarboxylase macB. The cytochrome P450 monooxygenase macC then catalyzes the oxidation of m-cresol to toluquinol. Epoxidation of toluquinol is then performed by the short chain dehydrogenase macD, with the help of macE, and a further prenylation by macG leads to 7-deacetoxyyanuthone A. The next step is the hydroxylation of C-22 of 7-deacetoxyyanuthone A by the cytochrome P450 monooxygenase macH to yield 22-deacetylyanuthone A. O-Mevalon transferase macI then attaches mevalon to the hydroxyl group of 22-deacetylyanuthone A to produce yanuthone E. The terpene cyclase macJ catalyzes the cyclization of 22-deacetylyanuthone A to macrophorin A. MacJ is also able to catalyze cyclization of yanuthone E and 7-deacetoxyyanuthone A to their corresponding macrophorins. The macJ products can be further modified by macH and macJ, as well as by the FAD-dependent monooxygenase macF, to produce additional macrophorins, including 4'-oxomacrophorin A, 4'-oxomacrophorin D and 4'-oxomacrophorin E. The sequence is that of Cytochrome P450 monooxygenase macC from Penicillium terrestre.